A 701-amino-acid polypeptide reads, in one-letter code: Glycine--tRNA ligase beta subunit (701 aa).

This sequence belongs to the class-II aminoacyl-tRNA synthetase family. In terms of assembly, tetramer of two alpha and two beta subunits.

Its subcellular location is the cytoplasm. It carries out the reaction tRNA(Gly) + glycine + ATP = glycyl-tRNA(Gly) + AMP + diphosphate. This Anaeromyxobacter dehalogenans (strain 2CP-1 / ATCC BAA-258) protein is Glycine--tRNA ligase beta subunit.